The chain runs to 145 residues: Basic phospholipase A2 KPA2 (145 aa).

The first 19 residues, 1 to 19 (MYPAHLLVLVAVCVSLLGA), serve as a signal peptide directing secretion. Positions 20–27 (ANIPPQPL) are excised as a propeptide. Intrachain disulfides connect Cys38–Cys97, Cys52–Cys144, Cys54–Cys70, Cys69–Cys125, Cys76–Cys118, Cys86–Cys111, and Cys104–Cys116. Residues Tyr53, Gly55, and Gly57 each contribute to the Ca(2+) site. Residue His73 is part of the active site. Asp74 is a binding site for Ca(2+). Residue Asp119 is part of the active site.

It belongs to the phospholipase A2 family. Group I subfamily. D49 sub-subfamily. In terms of assembly, monomer. Ca(2+) serves as cofactor. Expressed by the venom gland.

The protein localises to the secreted. The catalysed reaction is a 1,2-diacyl-sn-glycero-3-phosphocholine + H2O = a 1-acyl-sn-glycero-3-phosphocholine + a fatty acid + H(+). In terms of biological role, snake venom phospholipase A2 (PLA2) that shows anticoagulant and neurotoxic activities. PLA2 catalyzes the calcium-dependent hydrolysis of the 2-acyl groups in 3-sn-phosphoglycerides. The chain is Basic phospholipase A2 KPA2 from Bungarus caeruleus (Indian krait).